A 286-amino-acid chain; its full sequence is Flagellar filament 31.3 kDa core protein (286 aa).

It belongs to the bacterial flagellin family. As to quaternary structure, the core of the flagellum consists of several antigenically related polypeptides. In terms of processing, glycosylated. Glycosylation is not essential for motility.

The protein resides in the periplasmic flagellum. It localises to the periplasm. In terms of biological role, component of the core of the flagella. The protein is Flagellar filament 31.3 kDa core protein (flaB2) of Treponema maltophilum.